The following is a 336-amino-acid chain: Flavonoid 4'-O-methyltransferase 5 (336 aa).

2 residues coordinate S-adenosyl-L-methionine: Y140 and D203. H241 functions as the Proton acceptor in the catalytic mechanism.

It belongs to the class I-like SAM-binding methyltransferase superfamily. Cation-independent O-methyltransferase family. Homodimer. Expressed in leaves.

It carries out the reaction genkwanin + S-adenosyl-L-methionine = apigenin 4',7-dimethyl ether + S-adenosyl-L-homocysteine. The enzyme catalyses cirsiliol + S-adenosyl-L-methionine = eupatorin + S-adenosyl-L-homocysteine + H(+). The catalysed reaction is cirsimaritin + S-adenosyl-L-methionine = salvigenin + S-adenosyl-L-homocysteine + H(+). It catalyses the reaction scutellarein 7-methyl ether + S-adenosyl-L-methionine = ladanein + S-adenosyl-L-homocysteine + H(+). It carries out the reaction (2S)-sakuranetin + S-adenosyl-L-methionine = (2S)-naringenin 4',7-dimethyl ether + S-adenosyl-L-homocysteine + H(+). The protein operates within flavonoid metabolism. Its activity is regulated as follows. Substrate inhibition by genkwanin (GENK) at concentrations above 10 mM. Flavonoid 4'-O-methyltransferase involved in the biosynthesis of polymethoxylated flavonoids natural products such as nevadensin and salvigenin, aroma compounds which contribute to the flavor of sweet basil, and exhibit pharmacological activities such as anti-allergic, anti-oxidant, antibacterial, anti-proliferative, and anti-inflammatory effects. Catalyzes S-adenosylmethionine-dependent regioselective 4'-O-methylation of flavonoids; active on various hydroxylated flavonoid substrates, including scutellarein-7-methyl ether (SCU7Me) and, with a lower efficiency, cirsimaritin (CIRM), sakuranetin (NAR7Me), ladanein (LAD) and genkwanin (GENK). The chain is Flavonoid 4'-O-methyltransferase 5 from Ocimum basilicum (Sweet basil).